The primary structure comprises 63 residues: MGRIRQTFIKRTGEELIEKFADKFTSDFEENKKAVEEVAMISTKTLRNRVAGYVTAKVKKMNA.

This sequence belongs to the eukaryotic ribosomal protein eS17 family.

This Methanococcus maripaludis (strain C7 / ATCC BAA-1331) protein is Small ribosomal subunit protein eS17.